The chain runs to 360 residues: Histidinol-phosphate aminotransferase (360 aa).

K219 is subject to N6-(pyridoxal phosphate)lysine.

It belongs to the class-II pyridoxal-phosphate-dependent aminotransferase family. Histidinol-phosphate aminotransferase subfamily. As to quaternary structure, homodimer. It depends on pyridoxal 5'-phosphate as a cofactor.

It carries out the reaction L-histidinol phosphate + 2-oxoglutarate = 3-(imidazol-4-yl)-2-oxopropyl phosphate + L-glutamate. It functions in the pathway amino-acid biosynthesis; L-histidine biosynthesis; L-histidine from 5-phospho-alpha-D-ribose 1-diphosphate: step 7/9. The polypeptide is Histidinol-phosphate aminotransferase (Jannaschia sp. (strain CCS1)).